A 214-amino-acid polypeptide reads, in one-letter code: LexA repressor (214 aa).

A DNA-binding region (H-T-H motif) is located at residues 26 to 46 (VREIGEAVGLSSSSTVHSYLK). Active-site for autocatalytic cleavage activity residues include S138 and K175.

This sequence belongs to the peptidase S24 family. As to quaternary structure, homodimer.

The catalysed reaction is Hydrolysis of Ala-|-Gly bond in repressor LexA.. In terms of biological role, represses a number of genes involved in the response to DNA damage (SOS response), including recA and lexA. In the presence of single-stranded DNA, RecA interacts with LexA causing an autocatalytic cleavage which disrupts the DNA-binding part of LexA, leading to derepression of the SOS regulon and eventually DNA repair. This chain is LexA repressor, found in Desulforamulus reducens (strain ATCC BAA-1160 / DSM 100696 / MI-1) (Desulfotomaculum reducens).